The following is a 120-amino-acid chain: Large ribosomal subunit protein eL18 (120 aa).

Belongs to the eukaryotic ribosomal protein eL18 family. In terms of assembly, part of the 50S ribosomal subunit.

The chain is Large ribosomal subunit protein eL18 from Pyrococcus furiosus (strain ATCC 43587 / DSM 3638 / JCM 8422 / Vc1).